The following is a 368-amino-acid chain: tRNA-specific 2-thiouridylase MnmA (368 aa).

ATP is bound by residues 11-18 (GMSGGVDS) and M37. Positions 97 to 99 (NPD) are interaction with target base in tRNA. Catalysis depends on C102, which acts as the Nucleophile. C102 and C199 are oxidised to a cystine. Position 127 (G127) interacts with ATP. The tract at residues 149-151 (KDQ) is interaction with tRNA. Catalysis depends on C199, which acts as the Cysteine persulfide intermediate. The tract at residues 311–312 (RY) is interaction with tRNA.

This sequence belongs to the MnmA/TRMU family. In terms of assembly, interacts with TusE.

It is found in the cytoplasm. The catalysed reaction is S-sulfanyl-L-cysteinyl-[protein] + uridine(34) in tRNA + AH2 + ATP = 2-thiouridine(34) in tRNA + L-cysteinyl-[protein] + A + AMP + diphosphate + H(+). Functionally, catalyzes the 2-thiolation of uridine at the wobble position (U34) of tRNA(Lys), tRNA(Glu) and tRNA(Gln), leading to the formation of s(2)U34, the first step of tRNA-mnm(5)s(2)U34 synthesis. Sulfur is provided by IscS, via a sulfur-relay system. Binds ATP and its substrate tRNAs. This Escherichia coli O1:K1 / APEC protein is tRNA-specific 2-thiouridylase MnmA.